The following is a 143-amino-acid chain: MAKKILGYIKLQVPAGAATPSPPIGPALGQRGVNIMGFCKEFNARTEKEQKGTPLPTVITVYQDKSFTFVTKTPPATYYIKQAVGLQSGSGKTGRETVGKITRAQLREIAEKKMKDLNANDVEAAARIIEGSARSMGLQIVEA.

This sequence belongs to the universal ribosomal protein uL11 family. Part of the ribosomal stalk of the 50S ribosomal subunit. Interacts with L10 and the large rRNA to form the base of the stalk. L10 forms an elongated spine to which L12 dimers bind in a sequential fashion forming a multimeric L10(L12)X complex. One or more lysine residues are methylated.

In terms of biological role, forms part of the ribosomal stalk which helps the ribosome interact with GTP-bound translation factors. This Phenylobacterium zucineum (strain HLK1) protein is Large ribosomal subunit protein uL11.